Consider the following 895-residue polypeptide: Zinc finger protein 574 (895 aa).

C2H2-type zinc fingers lie at residues 16-38, 76-98, and 126-148; these read YVCSECNQLYGSLEEVLMHQNSH, YQCLECGQLLMSPSQLLEHQELH, and YECVDCKALFASQELWLNHRQTH. A Phosphoserine modification is found at Ser164. The C2H2-type 4 zinc-finger motif lies at 214 to 236; that stretch reads YKCSECSQLFQLPADFLEHQATH. The interval 239–301 is disordered; sequence APVPESQEPA…RARRNNSGEA (63 aa). Polar residues predominate over residues 247–257; sequence PALQQEVQASS. A compositionally biased stretch (basic and acidic residues) spans 274–287; the sequence is HSYELRNGEAIGRD. Ser298 carries the post-translational modification Phosphoserine. 4 consecutive C2H2-type zinc fingers follow at residues 309–331, 336–358, 364–386, and 392–413; these read LFCSACDQLFLSPHQLQQHLRSH, FKCPLCSRVFPSPSSLDQHLGDH, FLCVDCGLAFGTEALLLAHRRAH, and HSCPCGKTFVNLTKFLYHRRTH. Residues 434–460 are disordered; it reads FPEPAPAETGEPEAPEPPVSEETSAGP. 6 consecutive C2H2-type zinc fingers follow at residues 466-489, 495-517, 523-545, 551-573, 579-601, and 607-630; these read YRCLLCSREFGKALQLTRHQRFVH, HKCSICGKMFKKKSHVRNHLRTH, FPCPDCSKPFNSPANLARHRLTH, YRCGDCGKAFTQSSTLRQHRLVH, YRCQECGVRFHRPYRLLMHRYHH, and YKCRECPRSFLLRRLLEVHQLVVH. The C2H2-type 15; degenerate zinc-finger motif lies at 636–659; it reads HRCPSCGAAFPSSLRLREHRCAAA. The segment at 667–689 adopts a C2H2-type 16 zinc-finger fold; it reads FECGTCGKKVGSAARLQAHEAAH. A disordered region spans residues 687-732; it reads AAHAAAGPGEVLAKEPPAPRAPRATRAPVASPAALGGTATASPAPA. Low complexity predominate over residues 707-731; that stretch reads APRATRAPVASPAALGGTATASPAP. Ser717 carries the phosphoserine modification. At Thr724 the chain carries Phosphothreonine. A Phosphoserine modification is found at Ser728. 4 C2H2-type zinc fingers span residues 737–759, 765–787, 793–815, and 821–843; these read LECSECKKLFSTETSLQVHRRIH, YPCPDCGKAFRQSTHLKDHRRLH, FACEVCGKAFAISMRLAEHRRIH, and YSCPDCGKSYRSFSNLWKHRKTH. Asymmetric dimethylarginine is present on Arg831.

It belongs to the krueppel C2H2-type zinc-finger protein family.

The protein localises to the nucleus. In terms of biological role, may be involved in transcriptional regulation. The sequence is that of Zinc finger protein 574 (ZNF574) from Pongo abelii (Sumatran orangutan).